The following is a 265-amino-acid chain: Sulfur carrier protein FdhD (265 aa).

The active-site Cysteine persulfide intermediate is Cys-107.

It belongs to the FdhD family.

The protein resides in the cytoplasm. Required for formate dehydrogenase (FDH) activity. Acts as a sulfur carrier protein that transfers sulfur from IscS to the molybdenum cofactor prior to its insertion into FDH. The chain is Sulfur carrier protein FdhD from Staphylococcus aureus (strain JH9).